We begin with the raw amino-acid sequence, 126 residues long: Aspartate 1-decarboxylase (126 aa).

Residue S25 is the Schiff-base intermediate with substrate; via pyruvic acid of the active site. S25 is subject to Pyruvic acid (Ser). T57 provides a ligand contact to substrate. Catalysis depends on Y58, which acts as the Proton donor. 73–75 is a substrate binding site; the sequence is GAA.

It belongs to the PanD family. Heterooctamer of four alpha and four beta subunits. Pyruvate is required as a cofactor. Is synthesized initially as an inactive proenzyme, which is activated by self-cleavage at a specific serine bond to produce a beta-subunit with a hydroxyl group at its C-terminus and an alpha-subunit with a pyruvoyl group at its N-terminus.

It localises to the cytoplasm. It catalyses the reaction L-aspartate + H(+) = beta-alanine + CO2. It participates in cofactor biosynthesis; (R)-pantothenate biosynthesis; beta-alanine from L-aspartate: step 1/1. In terms of biological role, catalyzes the pyruvoyl-dependent decarboxylation of aspartate to produce beta-alanine. The chain is Aspartate 1-decarboxylase from Salmonella arizonae (strain ATCC BAA-731 / CDC346-86 / RSK2980).